Reading from the N-terminus, the 145-residue chain is 3-hydroxyacyl-[acyl-carrier-protein] dehydratase FabZ (145 aa).

Histidine 47 is a catalytic residue.

The protein belongs to the thioester dehydratase family. FabZ subfamily.

Its subcellular location is the cytoplasm. The catalysed reaction is a (3R)-hydroxyacyl-[ACP] = a (2E)-enoyl-[ACP] + H2O. Its function is as follows. Involved in unsaturated fatty acids biosynthesis. Catalyzes the dehydration of short chain beta-hydroxyacyl-ACPs and long chain saturated and unsaturated beta-hydroxyacyl-ACPs. This chain is 3-hydroxyacyl-[acyl-carrier-protein] dehydratase FabZ, found in Methylobacillus flagellatus (strain ATCC 51484 / DSM 6875 / VKM B-1610 / KT).